Here is a 254-residue protein sequence, read N- to C-terminus: 5-oxoprolinase subunit A 1 (254 aa).

The protein belongs to the LamB/PxpA family. Forms a complex composed of PxpA, PxpB and PxpC.

It carries out the reaction 5-oxo-L-proline + ATP + 2 H2O = L-glutamate + ADP + phosphate + H(+). Catalyzes the cleavage of 5-oxoproline to form L-glutamate coupled to the hydrolysis of ATP to ADP and inorganic phosphate. The protein is 5-oxoprolinase subunit A 1 of Burkholderia pseudomallei (strain K96243).